Here is a 733-residue protein sequence, read N- to C-terminus: Protein PAT1 homolog 2 (733 aa).

Disordered stretches follow at residues 42 to 75 (LDQE…PEAL) and 337 to 366 (LHPQ…PDPY). A compositionally biased stretch (basic and acidic residues) spans 49–59 (EPVKLEDDHTK). Low complexity predominate over residues 346-356 (SQRQRPQSSSR).

This sequence belongs to the PAT1 family. Interacts with ribonucleoprotein complex components. Interacts with cpeb. Oocyte-specific protein. Expressed throughout oogenesis but is not detectable in eggs, embryos, nor in adult tissues (at protein level).

The protein localises to the cytoplasm. Its subcellular location is the nucleus. RNA-binding protein that acts as a translational repressor. When overexpressed, able to disperse P-bodies. The sequence is that of Protein PAT1 homolog 2 (patl2) from Xenopus laevis (African clawed frog).